The primary structure comprises 707 residues: Zinc finger protein 60 (707 aa).

The region spanning 14 to 86 is the KRAB domain; sequence VTFRDVAVDF…VKKETGRPSQ (73 aa). 19 consecutive C2H2-type zinc fingers follow at residues 173–195, 201–223, 229–251, 257–282, 288–310, 316–338, 344–366, 372–394, 400–422, 428–450, 456–478, 484–506, 512–534, 540–562, 568–590, 596–618, 624–646, 652–674, and 680–702; these read YKCK…ESIH, YECK…QKSH, FECN…KNIH, FECE…RTIH, YKCN…QKIH, FHCK…ENIH, FECK…YDTH, FECN…QKTH, FKCK…QRIH, YQCK…QSIH, FECK…QRFH, FECK…KTSH, FECK…RIIH, YKCN…EKIH, FECK…QTIH, YECE…QRIH, FQCK…ERIH, FQCK…FRIH, and YECS…QSIH.

This sequence belongs to the krueppel C2H2-type zinc-finger protein family. In terms of tissue distribution, expressed widely and evenly in most adult mouse tissues.

Its subcellular location is the nucleus. In terms of biological role, may have a role during differentiation processes. The sequence is that of Zinc finger protein 60 (Zfp60) from Mus musculus (Mouse).